Consider the following 505-residue polypeptide: Monocarboxylate transporter 6 (505 aa).

At 1–17 the chain is on the cytoplasmic side; it reads MPQALERADGSWAWVVL. A helical transmembrane segment spans residues 18-38; that stretch reads LATMVTQGLTLGFPTCIGIFF. Residues 39–53 lie on the Extracellular side of the membrane; the sequence is TELQWEFQASNSETS. The helical transmembrane segment at 54–74 threads the bilayer; the sequence is WFPSILTAVLHMAGPLCSILV. The Cytoplasmic portion of the chain corresponds to 75–80; that stretch reads GRFGCR. Residues 81–101 form a helical membrane-spanning segment; it reads VTVMLGGVLASLGMVASSFSH. Over 102 to 110 the chain is Extracellular; it reads NLSQLYFTA. A helical transmembrane segment spans residues 111-131; the sequence is GFITGLGMCFSFQSSITVLGF. Residues 132–137 are Cytoplasmic-facing; the sequence is YFVRRR. A helical membrane pass occupies residues 138–158; it reads VLANALASMGVSLGITLWPLL. Residues 159–171 are Extracellular-facing; it reads SRYLLENLGWRGT. Residues 172–192 form a helical membrane-spanning segment; that stretch reads FLVFGGIFLHCCICGAIIRPV. Residues 193–239 are Cytoplasmic-facing; sequence ATSVAPETKECPPPPPETPALGCLAACGRTIQRHLAFDILRHNTGYC. Residues 240 to 260 form a helical membrane-spanning segment; it reads VYILGVMWSVLGFPLPQVFLV. The Extracellular segment spans residues 261–274; that stretch reads PYAMWHSVDEQQAA. Residues 275-295 form a helical membrane-spanning segment; the sequence is LLISIIGFSNIFLRPLAGLMA. Residues 296–305 lie on the Cytoplasmic side of the membrane; sequence GRPAFASHRK. The helical transmembrane segment at 306-326 threads the bilayer; the sequence is YLFSLALLLNGLTNLVCAASG. The Extracellular portion of the chain corresponds to 327 to 329; that stretch reads DFW. The helical transmembrane segment at 330–350 threads the bilayer; that stretch reads VLVGYCLAYSVSMSGIGALIF. At 351-367 the chain is on the cytoplasmic side; that stretch reads QVLMDIVPMDQFPRALG. The chain crosses the membrane as a helical span at residues 368–388; it reads LFTVLDGLAFLISPPLAGLLL. Residues 389 to 396 lie on the Extracellular side of the membrane; sequence DATNNFSY. The helical transmembrane segment at 397-417 threads the bilayer; that stretch reads VFYMSSFFLISAALFMGGSFY. At 418 to 505 the chain is on the cytoplasmic side; that stretch reads ALQKKEQGKQ…QTALGWNSPT (88 aa). The disordered stretch occupies residues 443-464; that stretch reads KDGPGKQRSPEIMCQSSRQPRP.

The protein belongs to the major facilitator superfamily. Monocarboxylate porter (TC 2.A.1.13) family. As to expression, highly expressed in kidney.

It is found in the cell membrane. Functionally, proton-linked monocarboxylate transporter. Catalyzes the rapid transport across the plasma membrane of many monocarboxylates such as lactate, pyruvate, branched-chain oxo acids derived from leucine, valine and isoleucine, and the ketone bodies acetoacetate, beta-hydroxybutyrate and acetate. The protein is Monocarboxylate transporter 6 (SLC16A5) of Homo sapiens (Human).